The primary structure comprises 92 residues: Em-like protein GEA6 (92 aa).

Basic and acidic residues-rich tracts occupy residues 1 to 18 (MASQ…KKGE) and 37 to 51 (AEGR…KEQL). The disordered stretch occupies residues 1 to 92 (MASQQEKKQL…IDESKFRTKT (92 aa)).

The protein belongs to the small hydrophilic plant seed protein family. Present only in nearly dry and dry seeds.

It is thought to provide protection for the cytoplasm during the desiccation stage of embryo development. This is Em-like protein GEA6 (EM6) from Arabidopsis thaliana (Mouse-ear cress).